The following is a 438-amino-acid chain: uncharacterized protein (438 aa).

In terms of domain architecture, FAD-binding PCMH-type spans I23 to A193. FAD contacts are provided by residues V55–G59, H60–S61, Q65, D117, T122, S128–F132, I183, Y393, and A430–Y433. H60 carries the post-translational modification Pros-8alpha-FAD histidine.

It belongs to the oxygen-dependent FAD-linked oxidoreductase family. Requires FAD as cofactor.

In terms of biological role, the FAS-operon encodes genes involved in cytokinin production and in host plant fasciation (leafy gall). This is an uncharacterized protein from Rhodococcoides fascians (Rhodococcus fascians).